Here is an 830-residue protein sequence, read N- to C-terminus: Beta-glucosidase A (830 aa).

D769 is a catalytic residue.

The protein belongs to the glycosyl hydrolase 3 family.

The enzyme catalyses Hydrolysis of terminal, non-reducing beta-D-glucosyl residues with release of beta-D-glucose.. In terms of biological role, b.fibrisolvens beta-glucosidase hydrolyzes cellobiose to a limited extent, cellotriose to cellobiose and glucose, and cellotetraose and cellopentaose to predominantly glucose. The sequence is that of Beta-glucosidase A (bglA) from Butyrivibrio fibrisolvens.